Reading from the N-terminus, the 1194-residue chain is Rho-associated protein kinase let-502 (1194 aa).

The Protein kinase domain maps to 68 to 330; it reads FRQLKVIGRG…VDEIRNHKFF (263 aa). ATP is bound by residues 74–82 and Lys97; that span reads IGRGAFGEV. The active-site Proton acceptor is Asp190. An AGC-kinase C-terminal domain is found at 331–402; it reads KNDEWTFETL…SNEYSPVKKL (72 aa). Coiled coils occupy residues 436–844 and 875–933; these read EEQY…MAKR and GRIL…EYPQ. Residues 784-846 enclose the RhoBD domain; the sequence is EQNLKHIENQ…LEEEMAKRQP (63 aa). In terms of domain architecture, PH spans 961–1171; that stretch reads IQIDGWLSLR…SQLRRFIEAS (211 aa). A Phorbol-ester/DAG-type zinc finger spans residues 1085–1138; the sequence is RHDFQELSYHTRTYCDDCGKKLSDFIRPTPAFECKNCHYKTHKEHIAQGTITMC.

This sequence belongs to the protein kinase superfamily. AGC Ser/Thr protein kinase family. As to quaternary structure, interacts with rho-1. The cofactor is Mg(2+).

The protein resides in the cytoplasm. The protein localises to the cytoskeleton. It localises to the cleavage furrow. It carries out the reaction L-seryl-[protein] + ATP = O-phospho-L-seryl-[protein] + ADP + H(+). The catalysed reaction is L-threonyl-[protein] + ATP = O-phospho-L-threonyl-[protein] + ADP + H(+). Activated by rho-1 binding. Functionally, negatively regulates mel-11 to relieve the inhibition of mlc-4, allowing contraction of the circumferentially oriented microfilaments in epidermal cells and thereby regulating myosin II contractility during spermathecal contraction, cleavage furrow contraction in early embryos, and embryonic elongation and morphogenesis. Required for P-cell migration. May also play a role in oocyte cellularization. The protein is Rho-associated protein kinase let-502 of Caenorhabditis briggsae.